The sequence spans 351 residues: Ribosomal RNA small subunit methyltransferase H (351 aa).

Residues 48 to 50, Asp-67, Phe-94, Asp-115, and Gln-122 contribute to the S-adenosyl-L-methionine site; that span reads GGY. Positions 274–351 are disordered; the sequence is AAQASRHVPG…PAPQGRGPRR (78 aa).

It belongs to the methyltransferase superfamily. RsmH family.

The protein localises to the cytoplasm. It catalyses the reaction cytidine(1402) in 16S rRNA + S-adenosyl-L-methionine = N(4)-methylcytidine(1402) in 16S rRNA + S-adenosyl-L-homocysteine + H(+). Functionally, specifically methylates the N4 position of cytidine in position 1402 (C1402) of 16S rRNA. The polypeptide is Ribosomal RNA small subunit methyltransferase H (Methylorubrum extorquens (strain PA1) (Methylobacterium extorquens)).